The chain runs to 377 residues: MSDSPVLALLKDLISRRSITPSDEGCQQLLISRLEKLGFECEVMIFADTTNLWARRGTEKPLFCFAGHTDVVPTGPEENWTYPPFEPTVVDGFLFGRGAADMKSGIAAFIIALEQFIKAHQDHQGSIALLITSDEEGPFINGTVRVIETLEARNEKIDYCIVGEPSSTEHVGDTIKNGRRGSLTADLTINGVQGHVAYPHMVENPIHTCIGPLTELSQMEWDKGNKYFPPTSFQVTNFNAGTGASNVVPGEAQIQFNFRYSTELTAEMIIARVVAILQKHKLNYQIKWTYNGSPFITQPGSLTNAVSEAIFAVNGLTTELSTSGGTSDARFIAPTGAQVVELGPGNKTIHKVNESVKIADLEELVHIHRLTLEKLLT.

His-68 contacts Zn(2+). The active site involves Asp-70. Asp-101 is a Zn(2+) binding site. Catalysis depends on Glu-135, which acts as the Proton acceptor. Residues Glu-136, Glu-164, and His-350 each contribute to the Zn(2+) site.

It belongs to the peptidase M20A family. DapE subfamily. Homodimer. Zn(2+) is required as a cofactor. It depends on Co(2+) as a cofactor.

The catalysed reaction is N-succinyl-(2S,6S)-2,6-diaminopimelate + H2O = (2S,6S)-2,6-diaminopimelate + succinate. The protein operates within amino-acid biosynthesis; L-lysine biosynthesis via DAP pathway; LL-2,6-diaminopimelate from (S)-tetrahydrodipicolinate (succinylase route): step 3/3. Catalyzes the hydrolysis of N-succinyl-L,L-diaminopimelic acid (SDAP), forming succinate and LL-2,6-diaminopimelate (DAP), an intermediate involved in the bacterial biosynthesis of lysine and meso-diaminopimelic acid, an essential component of bacterial cell walls. The polypeptide is Succinyl-diaminopimelate desuccinylase (Psychromonas ingrahamii (strain DSM 17664 / CCUG 51855 / 37)).